Consider the following 364-residue polypeptide: tRNA 2-selenouridine synthase (364 aa).

The Rhodanese domain maps to 14–137; that stretch reads LLADTPLIDV…LRQTAIQATW (124 aa). C97 functions as the S-selanylcysteine intermediate in the catalytic mechanism. Position 149 (G149) interacts with (2E)-geranyl diphosphate.

The protein belongs to the SelU family. Monomer.

The enzyme catalyses 5-methylaminomethyl-2-thiouridine(34) in tRNA + selenophosphate + (2E)-geranyl diphosphate + H2O + H(+) = 5-methylaminomethyl-2-selenouridine(34) in tRNA + (2E)-thiogeraniol + phosphate + diphosphate. It carries out the reaction 5-methylaminomethyl-2-thiouridine(34) in tRNA + (2E)-geranyl diphosphate = 5-methylaminomethyl-S-(2E)-geranyl-thiouridine(34) in tRNA + diphosphate. It catalyses the reaction 5-methylaminomethyl-S-(2E)-geranyl-thiouridine(34) in tRNA + selenophosphate + H(+) = 5-methylaminomethyl-2-(Se-phospho)selenouridine(34) in tRNA + (2E)-thiogeraniol. The catalysed reaction is 5-methylaminomethyl-2-(Se-phospho)selenouridine(34) in tRNA + H2O = 5-methylaminomethyl-2-selenouridine(34) in tRNA + phosphate. In terms of biological role, involved in the post-transcriptional modification of the uridine at the wobble position (U34) of tRNA(Lys), tRNA(Glu) and tRNA(Gln). Catalyzes the conversion of 2-thiouridine (S2U-RNA) to 2-selenouridine (Se2U-RNA). Acts in a two-step process involving geranylation of 2-thiouridine (S2U) to S-geranyl-2-thiouridine (geS2U) and subsequent selenation of the latter derivative to 2-selenouridine (Se2U) in the tRNA chain. The polypeptide is tRNA 2-selenouridine synthase (Salmonella typhimurium (strain LT2 / SGSC1412 / ATCC 700720)).